The following is a 420-amino-acid chain: Glucose-1-phosphate adenylyltransferase (420 aa).

Alpha-D-glucose 1-phosphate-binding positions include Tyr107, Gly172, 187–188, and Ser205; that span reads EK.

The protein belongs to the bacterial/plant glucose-1-phosphate adenylyltransferase family. As to quaternary structure, homotetramer.

It catalyses the reaction alpha-D-glucose 1-phosphate + ATP + H(+) = ADP-alpha-D-glucose + diphosphate. It participates in glycan biosynthesis; glycogen biosynthesis. Involved in the biosynthesis of ADP-glucose, a building block required for the elongation reactions to produce glycogen. Catalyzes the reaction between ATP and alpha-D-glucose 1-phosphate (G1P) to produce pyrophosphate and ADP-Glc. The protein is Glucose-1-phosphate adenylyltransferase of Rhizobium johnstonii (strain DSM 114642 / LMG 32736 / 3841) (Rhizobium leguminosarum bv. viciae).